The following is a 306-amino-acid chain: uncharacterized protein (306 aa).

The Cytoplasmic portion of the chain corresponds to 1 to 6; it reads MRFRQL. A helical transmembrane segment spans residues 7–27; it reads LPLFGALFALYIIWGSTYFVI. Residues 18 to 141 enclose the EamA 1 domain; the sequence is IIWGSTYFVI…GLAGIIMLNS (124 aa). Residues 28–36 are Periplasmic-facing; sequence RIGVESWPP. A helical membrane pass occupies residues 37-57; the sequence is LMMAGVRFLAAGILLLAFLLL. The Cytoplasmic segment spans residues 58-67; that stretch reads RGHKLPPLRP. A helical membrane pass occupies residues 68–88; it reads LLNAALIGLLLLAVGNGMVTV. Over 89 to 93 the chain is Periplasmic; the sequence is AEHQN. The chain crosses the membrane as a helical span at residues 94–114; that stretch reads VPSGIAAVVVATVPLFTLCFS. The Cytoplasmic segment spans residues 115 to 125; it reads RLFGIKTRKLE. A helical membrane pass occupies residues 126–146; that stretch reads WVGIAIGLAGIIMLNSGGNLS. The Periplasmic portion of the chain corresponds to 147–148; that stretch reads GN. The helical transmembrane segment at 149-169 threads the bilayer; that stretch reads PWGAILILIGSISWAFGSVYG. Residues 160 to 285 form the EamA 2 domain; sequence ISWAFGSVYG…IVFAVVLVTL (126 aa). At 170-173 the chain is on the cytoplasmic side; sequence SRIT. Residues 174–194 traverse the membrane as a helical segment; that stretch reads LPVGMMAGAIEMLAAGVVLMI. Topologically, residues 195-206 are periplasmic; it reads ASMIAGEKLTAL. Residues 207–227 traverse the membrane as a helical segment; the sequence is PSLSGFLAVGYLALFGSIIAI. The Cytoplasmic portion of the chain corresponds to 228–239; that stretch reads NAYMYLIRNVSP. A helical membrane pass occupies residues 240-260; it reads ALATSYAYVNPVVAVLLGTGL. Topologically, residues 261–269 are periplasmic; it reads GGETLSKIE. A helical transmembrane segment spans residues 270 to 290; sequence WLALGVIVFAVVLVTLGKYLF. At 291-306 the chain is on the cytoplasmic side; that stretch reads PAKPVVAPVIQDASSE.

This sequence belongs to the EamA transporter family.

It is found in the cell inner membrane. This is an uncharacterized protein from Escherichia coli O157:H7.